Here is a 130-residue protein sequence, read N- to C-terminus: MSMQDTLADMFTRIRNAQMAEKETVRMPSSKMKVAVANVLKEEGFITDYKASEEAKPVLEITLKYYQGAPVIENISRASRPGLRQYKAANDLPTVNGGLGIAIVSTSKGVMTDRAARKAGVGGEVICTVF.

This sequence belongs to the universal ribosomal protein uS8 family. As to quaternary structure, part of the 30S ribosomal subunit. Contacts proteins S5 and S12.

Its function is as follows. One of the primary rRNA binding proteins, it binds directly to 16S rRNA central domain where it helps coordinate assembly of the platform of the 30S subunit. In Hahella chejuensis (strain KCTC 2396), this protein is Small ribosomal subunit protein uS8.